The primary structure comprises 389 residues: Phospho-N-acetylmuramoyl-pentapeptide-transferase (389 aa).

The next 10 helical transmembrane spans lie at 21-41, 70-90, 97-117, 134-154, 189-209, 222-242, 259-279, 286-306, 311-331, and 366-386; these read FITF…LFFG, GTPT…TLLW, FVWV…VDDY, YMWQ…SVSA, TISY…VIVG, GLAI…AYLT, AGEL…FLWF, VFMG…IAVI, IVLF…MIQV, and QVVV…LSTL.

This sequence belongs to the glycosyltransferase 4 family. MraY subfamily. It depends on Mg(2+) as a cofactor.

The protein resides in the cell inner membrane. It carries out the reaction UDP-N-acetyl-alpha-D-muramoyl-L-alanyl-gamma-D-glutamyl-meso-2,6-diaminopimeloyl-D-alanyl-D-alanine + di-trans,octa-cis-undecaprenyl phosphate = di-trans,octa-cis-undecaprenyl diphospho-N-acetyl-alpha-D-muramoyl-L-alanyl-D-glutamyl-meso-2,6-diaminopimeloyl-D-alanyl-D-alanine + UMP. Its pathway is cell wall biogenesis; peptidoglycan biosynthesis. Catalyzes the initial step of the lipid cycle reactions in the biosynthesis of the cell wall peptidoglycan: transfers peptidoglycan precursor phospho-MurNAc-pentapeptide from UDP-MurNAc-pentapeptide onto the lipid carrier undecaprenyl phosphate, yielding undecaprenyl-pyrophosphoryl-MurNAc-pentapeptide, known as lipid I. In Herminiimonas arsenicoxydans, this protein is Phospho-N-acetylmuramoyl-pentapeptide-transferase.